The chain runs to 131 residues: Chromatin accessibility complex protein 1 (131 aa).

At A2 the chain carries N-acetylalanine. Residues 100–124 (ASKYLKMLKEEKREEDEENDNDNES) adopt a coiled-coil conformation. N6-acetyllysine is present on K102. A disordered region spans residues 109–131 (EEKREEDEENDNDNESDHDEADS). Over residues 112–131 (REEDEENDNDNESDHDEADS) the composition is skewed to acidic residues. The residue at position 124 (S124) is a Phosphoserine.

Heterodimer with POLE3; binds to DNA. Component of the CHRAC ISWI chromatin remodeling complex at least composed of SMARCA5/SNF2H, BAZ1A/ACF1, CHRAC1 and POLE3; the complex preferentially binds DNA through the CHRAC1-POLE3 heterodimer and possesses ATP-dependent nucleosome-remodeling activity. Within the complex, the heterodimer with POLE3 interacts with SMARCA5/SNF2H; the interaction is direct and enhances nucleosome sliding activity by the SMARCA5/SNF2H and BAZ1A/ACF1 interaction. Within the complex, the heterodimer with POLE3 interacts with BAZ1A/ACF1; the interactions are direct. In terms of tissue distribution, expressed in heart, brain, placenta, lung, liver, skeletal muscle, kidney and pancreas.

It is found in the nucleus. In terms of biological role, forms a complex with DNA polymerase epsilon subunit POLE3 and binds naked DNA, which is then incorporated into chromatin, aided by the nucleosome remodeling activity of ISWI/SNF2H and ACF1. Does not enhance nucleosome sliding activity of the ACF-5 ISWI chromatin remodeling complex. The polypeptide is Chromatin accessibility complex protein 1 (CHRAC1) (Homo sapiens (Human)).